Reading from the N-terminus, the 358-residue chain is Phospho-N-acetylmuramoyl-pentapeptide-transferase (358 aa).

Helical transmembrane passes span 13–35, 81–101, 106–126, 142–162, 171–191, 201–221, 228–248, 268–290, and 336–356; these read LLIL…IFIG, MGGV…NINL, LFLL…DDFL, FFLQ…KDLI, SWQI…LVGI, LDGL…TEIL, LIIF…FLKY, ILGS…GIFI, and IVEN…VLKI.

Belongs to the glycosyltransferase 4 family. MraY subfamily. It depends on Mg(2+) as a cofactor.

It localises to the cell inner membrane. It catalyses the reaction UDP-N-acetyl-alpha-D-muramoyl-L-alanyl-gamma-D-glutamyl-meso-2,6-diaminopimeloyl-D-alanyl-D-alanine + di-trans,octa-cis-undecaprenyl phosphate = di-trans,octa-cis-undecaprenyl diphospho-N-acetyl-alpha-D-muramoyl-L-alanyl-D-glutamyl-meso-2,6-diaminopimeloyl-D-alanyl-D-alanine + UMP. Its pathway is cell wall biogenesis; peptidoglycan biosynthesis. Its function is as follows. Catalyzes the initial step of the lipid cycle reactions in the biosynthesis of the cell wall peptidoglycan: transfers peptidoglycan precursor phospho-MurNAc-pentapeptide from UDP-MurNAc-pentapeptide onto the lipid carrier undecaprenyl phosphate, yielding undecaprenyl-pyrophosphoryl-MurNAc-pentapeptide, known as lipid I. This chain is Phospho-N-acetylmuramoyl-pentapeptide-transferase, found in Prochlorococcus marinus (strain MIT 9312).